Reading from the N-terminus, the 135-residue chain is Small ribosomal subunit protein eS6 (135 aa).

Belongs to the eukaryotic ribosomal protein eS6 family.

The chain is Small ribosomal subunit protein eS6 from Methanospirillum hungatei JF-1 (strain ATCC 27890 / DSM 864 / NBRC 100397 / JF-1).